The following is a 313-amino-acid chain: Olfactory receptor 4M2 (313 aa).

The Cytoplasmic segment spans residues 1–25 (METANYTKVTEFVLTGLSQTPEVQL). The helical transmembrane segment at 26–46 (VLFVIFLSFYLFILPGNILII) threads the bilayer. Residues 47–57 (CTISLDPHLTS) are Extracellular-facing. A helical transmembrane segment spans residues 58–78 (PMYFLLANLAFLDIWYSSITA). Residues 79–97 (PEMLIDFFVERKIISFDEC) are Cytoplasmic-facing. A disulfide bridge connects residues Cys97 and Cys179. The chain crosses the membrane as a helical span at residues 98–118 (IAQLFFLHFAGASEMFLLTVM). Residues 119-142 (AFDLYTAICRPLHYATIMNQRLCC) are Extracellular-facing. The chain crosses the membrane as a helical span at residues 143-163 (ILVALSWRGGFIHSIIQVALI). Over 164–204 (VRLPFCGPNELDSYFCDITQVVRIACANTFPEELVMICSSG) the chain is Cytoplasmic. A helical transmembrane segment spans residues 205–225 (LISVVCLIALLMSYAFLLALL). At 226-238 (KKLSGSGENTNRA) the chain is on the extracellular side. A helical transmembrane segment spans residues 239 to 259 (VSTCYSHITIVVLMFGPSIYI). Over 260 to 270 (YARPFDSFSLD) the chain is Cytoplasmic. A helical membrane pass occupies residues 271-291 (KVVSVFNTLIFPLHNPIIYTL). The Extracellular portion of the chain corresponds to 292-313 (RNKEVKAAMRKLVTKYILCKEK).

This sequence belongs to the G-protein coupled receptor 1 family.

The protein localises to the membrane. In terms of biological role, odorant receptor. This chain is Olfactory receptor 4M2, found in Homo sapiens (Human).